Here is a 208-residue protein sequence, read N- to C-terminus: MGRKRSASSSRWLAEHFKDQFVQKAHKQKLRSRAYFKLDEIQQTDRLFKPGMTVVDLGAAPGGWSQYAVTQIGSKGRIIACDILDMNPIVGVDFLQGDFREESVLNALLERVGDDMVDVVMSDMAPNFSGMPSVDIPRAMYLVELALDMCRQVLAPKGSFVVKVFQGEGFDDYLRDIRAMFTTVKVRKPEASRDRSREVYIVATGYKG.

5 residues coordinate S-adenosyl-L-methionine: G62, W64, D82, D98, and D123. K163 serves as the catalytic Proton acceptor.

It belongs to the class I-like SAM-binding methyltransferase superfamily. RNA methyltransferase RlmE family.

The protein localises to the cytoplasm. It carries out the reaction uridine(2552) in 23S rRNA + S-adenosyl-L-methionine = 2'-O-methyluridine(2552) in 23S rRNA + S-adenosyl-L-homocysteine + H(+). Functionally, specifically methylates the uridine in position 2552 of 23S rRNA at the 2'-O position of the ribose in the fully assembled 50S ribosomal subunit. The chain is Ribosomal RNA large subunit methyltransferase E from Actinobacillus pleuropneumoniae serotype 5b (strain L20).